A 158-amino-acid polypeptide reads, in one-letter code: SsrA-binding protein (158 aa).

The protein belongs to the SmpB family.

The protein localises to the cytoplasm. Its function is as follows. Required for rescue of stalled ribosomes mediated by trans-translation. Binds to transfer-messenger RNA (tmRNA), required for stable association of tmRNA with ribosomes. tmRNA and SmpB together mimic tRNA shape, replacing the anticodon stem-loop with SmpB. tmRNA is encoded by the ssrA gene; the 2 termini fold to resemble tRNA(Ala) and it encodes a 'tag peptide', a short internal open reading frame. During trans-translation Ala-aminoacylated tmRNA acts like a tRNA, entering the A-site of stalled ribosomes, displacing the stalled mRNA. The ribosome then switches to translate the ORF on the tmRNA; the nascent peptide is terminated with the 'tag peptide' encoded by the tmRNA and targeted for degradation. The ribosome is freed to recommence translation, which seems to be the essential function of trans-translation. This chain is SsrA-binding protein, found in Acinetobacter baumannii (strain AB307-0294).